The following is an 83-amino-acid chain: Short neurotoxin NCA-02/NCA-05/UER-05 (83 aa).

Residues 1–21 (MKTLLLTLVVVTMVCLDLGYT) form the signal peptide. 4 disulfides stabilise this stretch: C24–C45, C38–C62, C64–C75, and C76–C81.

This sequence belongs to the three-finger toxin family. Short-chain subfamily. Type I alpha-neurotoxin sub-subfamily. As to expression, expressed by the venom gland.

It localises to the secreted. In terms of biological role, binds to muscle nicotinic acetylcholine receptor (nAChR) and inhibit acetylcholine from binding to the receptor, thereby impairing neuromuscular transmission. The protein is Short neurotoxin NCA-02/NCA-05/UER-05 of Laticauda colubrina (Yellow-lipped sea krait).